Here is a 354-residue protein sequence, read N- to C-terminus: Rhodopsin (354 aa).

Topologically, residues 1-36 (MNGTEGPYFYIPMLNTTGVVRSPYEYPQYYLVNPAA) are extracellular. N-linked (GlcNAc...) asparagine glycosylation is found at Asn-2 and Asn-15. The chain crosses the membrane as a helical span at residues 37–61 (YAVLGAYMFFLILVGFPINFLTLYV). Topologically, residues 62–73 (TIEHKKLRTPLN) are cytoplasmic. The helical transmembrane segment at 74–96 (YILLNLAVADLFMVFGGFTTTIY) threads the bilayer. Topologically, residues 97–110 (TSMHGYFVLGRLGC) are extracellular. Cys-110 and Cys-187 are joined by a disulfide. Residues 111 to 133 (NVEGFSATLGGEIALWSLVVLAI) traverse the membrane as a helical segment. Residues 134–136 (ERW) carry the 'Ionic lock' involved in activated form stabilization motif. Topologically, residues 134-152 (ERWVVVCKPISNFRFGENH) are cytoplasmic. A helical transmembrane segment spans residues 153–173 (AIMGVAFTWFMAAACAVPPLF). Residues 174–202 (GWSRYIPEGMQCSCGIDYYTRAEGFNNES) are Extracellular-facing. A glycan (N-linked (GlcNAc...) asparagine) is linked at Asn-200. A helical membrane pass occupies residues 203–224 (FVIYMFTCHFCIPLMVVFFCYG). At 225–252 (RLVCAVKEAAAAQQESETTQRAEREVTR) the chain is on the cytoplasmic side. A helical transmembrane segment spans residues 253–274 (MVIIMVVSFLVSWVPYASVAWY). Over 275 to 286 (IFTHQGSEFGPL) the chain is Extracellular. A helical membrane pass occupies residues 287–308 (FMTIPAFFAKSSSIYNPMIYIC). Lys-296 bears the N6-(retinylidene)lysine mark. Over 309–354 (MNKQFRHCMITTLCCGKNPFEEEEGASSTASKTEASSVSSSSVSPA) the chain is Cytoplasmic. Residues Cys-322 and Cys-323 are each lipidated (S-palmitoyl cysteine). Residues 329–354 (EEEEGASSTASKTEASSVSSSSVSPA) are disordered. The span at 334–354 (ASSTASKTEASSVSSSSVSPA) shows a compositional bias: low complexity.

The protein belongs to the G-protein coupled receptor 1 family. Opsin subfamily. In terms of processing, phosphorylated on some or all of the serine and threonine residues present in the C-terminal region. Contains one covalently linked retinal chromophore.

Its subcellular location is the membrane. It is found in the cell projection. It localises to the cilium. The protein resides in the photoreceptor outer segment. In terms of biological role, photoreceptor required for image-forming vision at low light intensity. While most salt water fish species use retinal as chromophore, most freshwater fish use 3-dehydroretinal, or a mixture of retinal and 3-dehydroretinal. Light-induced isomerization of 11-cis to all-trans retinal triggers a conformational change that activates signaling via G-proteins. Subsequent receptor phosphorylation mediates displacement of the bound G-protein alpha subunit by arrestin and terminates signaling. This is Rhodopsin (rho) from Atherina boyeri (Big-scale sand smelt).